Reading from the N-terminus, the 323-residue chain is tRNA U34 carboxymethyltransferase (323 aa).

Carboxy-S-adenosyl-L-methionine is bound by residues Lys-91, Trp-105, Lys-110, Gly-130, 152 to 154, 181 to 182, Met-196, Tyr-200, and Arg-315; these read DPT and IE.

It belongs to the class I-like SAM-binding methyltransferase superfamily. CmoB family. Homotetramer.

It carries out the reaction carboxy-S-adenosyl-L-methionine + 5-hydroxyuridine(34) in tRNA = 5-carboxymethoxyuridine(34) in tRNA + S-adenosyl-L-homocysteine + H(+). Functionally, catalyzes carboxymethyl transfer from carboxy-S-adenosyl-L-methionine (Cx-SAM) to 5-hydroxyuridine (ho5U) to form 5-carboxymethoxyuridine (cmo5U) at position 34 in tRNAs. The protein is tRNA U34 carboxymethyltransferase of Escherichia coli (strain SE11).